The sequence spans 577 residues: Arginine--tRNA ligase (577 aa).

The short motif at 122–132 is the 'HIGH' region element; it reads PNVAKEMHVGH.

This sequence belongs to the class-I aminoacyl-tRNA synthetase family. Monomer.

Its subcellular location is the cytoplasm. It catalyses the reaction tRNA(Arg) + L-arginine + ATP = L-arginyl-tRNA(Arg) + AMP + diphosphate. This chain is Arginine--tRNA ligase, found in Salmonella choleraesuis (strain SC-B67).